Consider the following 438-residue polypeptide: MRETSSREDTNNIGKAPEMSGGTIMDTMTSLPHQNDQNVIRHLTNLVKSPASGDDDIKKKEDSIMELGNILAQNKQTEELRNMIEQTRPFLVSLGKAKAAKLVRDLVDLCLKIDDQDGDIKVGLVKECIQWATEQNRTFLRQTLTARLVRLYNDLQRYTQALPLAADLIRELKKVDDKDVLVEVELEESKAYYNLSNIGRARASLTGARTTANAIYVNPRMQAALDLQSGILHAADEKDFKTAFSYFYEAFEGYDSVDEKVSALTALKYMLLCKVMLDLPDEVNSLLSAKLALKYNGSDLDAMKAIAAAAQKRSLKDFQVAFGSFPQELQMDPVVRKHFHSLSERMLEKDLCRIIEPYSFVQIEHVAQQIGIDRSKVEKKLSQMILDQKLSGSLDQGEGMLIVFEIAVPDEAYQTALDTIHAMGEVVDALYSNASKIN.

Positions 1–10 are enriched in basic and acidic residues; sequence MRETSSREDT. The interval 1–30 is disordered; sequence MRETSSREDTNNIGKAPEMSGGTIMDTMTS. In terms of domain architecture, PCI spans 239-408; that stretch reads DFKTAFSYFY…GMLIVFEIAV (170 aa).

The protein belongs to the proteasome subunit S9 family. Component of the lid subcomplex of the 19S proteasome regulatory particle complex (also named PA700 complex). The 26S proteasome consists of a 20S proteasome core and two 19S regulatory subunits.

Its function is as follows. Component of the lid subcomplex of the 26S proteasome, a multiprotein complex involved in the ATP-dependent degradation of ubiquitinated proteins. In the complex, rpn-6.1 is required for proteasome assembly. Plays a key role in increased proteasome activity in response to proteotoxic stress: induced by daf-16, promoting enhanced assembly of the 26S proteasome and higher proteasome activity, leading to extended lifespan. The polypeptide is Probable 26S proteasome regulatory subunit rpn-6.1 (Caenorhabditis elegans).